The sequence spans 249 residues: MDTVRLQCHICCSVGEIKNYFLQPVDAITILPIVELHTCRHQLCVMCVRKIAQRGRDKRVECPMCRRKNAHFNVYSVNRNSVDVLRCSVADVREHGRFGGLADAASLARGLFEPSLLEAEPAPDNSFGPNELQLVLKRLKAQIEAQTRTNYDLQLQATALERTIEEANDRLGKSRGDYSDACKLMDELRGDRLRAERAVKALADAHAQWADKNAKMRRENDRLTNENIGLIRDNNLFKQNTARKRKIAP.

The segment at 8-66 adopts an RING-type zinc-finger fold; sequence CHICCSVGEIKNYFLQPVDAITILPIVELHTCRHQLCVMCVRKIAQRGRDKRVECPMCR.

This chain is Zinc finger protein CG30 (CG30), found in Orgyia pseudotsugata (Douglas-fir tussock moth).